Consider the following 397-residue polypeptide: LIM/homeobox protein Lhx9 (397 aa).

2 LIM zinc-binding domains span residues 69–130 (ALCA…RFSV) and 131–193 (QRCA…LLQG). Disordered regions lie at residues 248 to 272 (ENEA…RMRT), 330 to 365 (ENGG…LTDL), and 378 to 397 (SNMD…TNLF). Residues 267-326 (TKRMRTSFKHHQLRTMKSYFAINHNPDAKDLKQLAQKTGLTKRVLQVWFQNARAKFRRNL) constitute a DNA-binding region (homeobox). Low complexity predominate over residues 353–365 (LTPPGTATTLTDL). Positions 387 to 397 (SPSQTTLTNLF) are enriched in polar residues.

In terms of assembly, interacts with LDB1 and LDB2. As to expression, expressed in the dorsal thalamus and inner nuclei of the cerebellum.

Its subcellular location is the nucleus. Functionally, involved in gonadal development. The sequence is that of LIM/homeobox protein Lhx9 (Lhx9) from Mus musculus (Mouse).